A 450-amino-acid polypeptide reads, in one-letter code: Guanine deaminase (450 aa).

His-88 and His-90 together coordinate Zn(2+). Substrate-binding positions include 90–93 (HAPQ), 218–219 (RF), 245–248 (HLSE), and Asp-335. The Zn(2+) site is built by His-245 and Asp-335.

The protein belongs to the metallo-dependent hydrolases superfamily. ATZ/TRZ family. It depends on Zn(2+) as a cofactor.

The enzyme catalyses guanine + H2O + H(+) = xanthine + NH4(+). It functions in the pathway purine metabolism; guanine degradation; xanthine from guanine: step 1/1. Functionally, catalyzes the hydrolytic deamination of guanine, producing xanthine and ammonia. In Dictyostelium discoideum (Social amoeba), this protein is Guanine deaminase (guaD).